Consider the following 346-residue polypeptide: MVSPATTATMSAWQVRRPGPMDTGPLERVTTRVPRPAPSELLVAVHACGVCRTDLHVTEGDLPVHRERVIPGHEVVGEVIEVGSAVGAAAGGEFDRGDRVGIAWLRHTCGVCKYCRRGSENLCPQSRYTGWDADGGYAEFTTVPAAFAHHLPSGYSDSELAPLLCAGIIGYRSLLRTELPPGGRLGLYGFGGSAHITAQVALAQGAEIHVMTRGARARKLALQLGAASAQDAADRPPVPLDAAILFAPVGDLVLPALEALDRGGILAIAGIHLTDIPDLNYQQHLFQERQIRSVTSNTRADARAFFDFAAQHHIEVTTPEYPLGQADRALGDLSAGRIAGAAVLLI.

Zn(2+)-binding residues include C51, H73, C109, C112, C115, C123, and C165.

This sequence belongs to the zinc-containing alcohol dehydrogenase family. Requires Zn(2+) as cofactor.

It catalyses the reaction a primary alcohol + NAD(+) = an aldehyde + NADH + H(+). It carries out the reaction a secondary alcohol + NAD(+) = a ketone + NADH + H(+). This chain is Probable alcohol dehydrogenase AdhA (adhA), found in Mycobacterium tuberculosis (strain CDC 1551 / Oshkosh).